A 2522-amino-acid polypeptide reads, in one-letter code: Unconventional myosin-IXAa (2522 aa).

The region spanning 15–113 (SELTLRIYPG…YRFLLREKNL (99 aa)) is the Ras-associating domain. One can recognise a Myosin motor domain in the interval 147–1007 (KDFDDLCNLP…ERQRLQDLLH (861 aa)). A helical transmembrane segment spans residues 176–196 (IYTYVGSILIVINPFKFLPIY). 240-247 (GESGSGKT) provides a ligand contact to ATP. The tract at residues 767–802 (VNRRNPRTPLSDLQGSNAINQREGWNGRPGRQNRLS) is disordered. A compositionally biased stretch (polar residues) spans 777-786 (SDLQGSNAIN). An actin-binding region spans residues 888 to 910 (LNKLMETLGQSQPYFVKCIRSNS). 4 consecutive IQ domains span residues 1012-1039 (SRIV…AACQ), 1063-1092 (QEGA…ASVL), 1102-1131 (QRRA…ATIR), and 1125-1154 (QRDA…QRLK). The neck or regulatory domain stretch occupies residues 1012 to 1149 (SRIVYLQRRF…LARQRFRELQ (138 aa)). The tail stretch occupies residues 1150–2497 (KQRLKITHLP…LQGAKSSPQR (1348 aa)). 6 disordered regions span residues 1218-1254 (GMAP…RRMR), 1318-1409 (DKAP…STRR), 1424-1612 (NEAD…GNIF), 1630-1754 (NQEK…GRVR), 1799-1827 (RLSP…VKRR), and 1962-1983 (LDSS…KDTD). A compositionally biased stretch (basic and acidic residues) spans 1229 to 1242 (TIRERPRTLEDPNQ). Polar residues-rich tracts occupy residues 1330-1349 (SPSS…STPD) and 1366-1390 (SLPT…NSVT). Composition is skewed to basic and acidic residues over residues 1399-1408 (PSKDKKESTR) and 1426-1435 (ADVKPLEVKD). Positions 1437-1454 (AAQTSEPPSPAQPSTDSS) are enriched in polar residues. Residues 1456–1525 (VLEKLEKLNE…LRRIEQSRQE (70 aa)) are a coiled coil. 4 stretches are compositionally biased toward basic and acidic residues: residues 1458–1484 (EKLE…EMME), 1492–1523 (ILEE…EQSR), 1549–1566 (PARE…RPKD), and 1580–1589 (LESRGDEARS). Composition is skewed to polar residues over residues 1594-1604 (KPSNQNVNISM) and 1631-1641 (QEKTPGAQNEV). The segment covering 1656–1665 (PGHKKARMAR) has biased composition (basic residues). Residues 1681–1690 (GESEEEEYDE) show a composition bias toward acidic residues. 2 stretches are compositionally biased toward basic and acidic residues: residues 1738–1753 (LGKH…DGRV) and 1810–1822 (LQRE…EPSP). The segment at 1990-2039 (GHIFKSTQYSIPTYCEYCSSLIWMMDKACVCKLCRYACHRKCCQKMTTKC) adopts a Phorbol-ester/DAG-type zinc-finger fold. The Rho-GAP domain maps to 2054–2242 (VELSRLTNDE…LIICEQMNKY (189 aa)). 2 disordered regions span residues 2274–2325 (PVHR…QEEK) and 2348–2522 (LEPR…EFMV). The stretch at 2317–2344 (QVAMQQEEKVLTEQIESLQKEKEELTFE) forms a coiled coil. Positions 2366-2383 (TADSSENLNVDSEGATSD) are enriched in polar residues. Residues 2413–2429 (SLDSIDSCSTVSSVSSS) are compositionally biased toward low complexity. The segment covering 2436–2448 (RTHKLSLRSKSPS) has biased composition (basic residues). A compositionally biased stretch (basic and acidic residues) spans 2497–2506 (RHREQKKDPE).

Belongs to the TRAFAC class myosin-kinesin ATPase superfamily. Myosin family.

It is found in the membrane. The protein resides in the cytoplasm. It localises to the synapse. Its subcellular location is the cell projection. The protein localises to the growth cone. Myosins are actin-based motor molecules with ATPase activity. Unconventional myosins serve in intracellular movements. Regulates Rho by stimulating it's GTPase activity in neurons. Required for the regulation of neurite branching and motor neuron axon guidance. The protein is Unconventional myosin-IXAa (myo9aa) of Danio rerio (Zebrafish).